The chain runs to 295 residues: Nucleotide-binding protein CMS1991 (295 aa).

An ATP-binding site is contributed by 19–26; the sequence is GMSGAGRS. 70–73 provides a ligand contact to GTP; the sequence is DVRG.

Belongs to the RapZ-like family.

Functionally, displays ATPase and GTPase activities. In Clavibacter sepedonicus (Clavibacter michiganensis subsp. sepedonicus), this protein is Nucleotide-binding protein CMS1991.